Here is a 115-residue protein sequence, read N- to C-terminus: Large ribosomal subunit protein bL19 (115 aa).

This sequence belongs to the bacterial ribosomal protein bL19 family.

Functionally, this protein is located at the 30S-50S ribosomal subunit interface and may play a role in the structure and function of the aminoacyl-tRNA binding site. In Shouchella clausii (strain KSM-K16) (Alkalihalobacillus clausii), this protein is Large ribosomal subunit protein bL19.